The chain runs to 337 residues: 4-hydroxyproline 2-epimerase 2 (337 aa).

Catalysis depends on Cys-90, which acts as the Proton acceptor. Substrate is bound by residues 91-92 (GH), His-223, and Asp-249. Cys-253 acts as the Proton donor in catalysis. 254–255 (GT) is a binding site for substrate.

It belongs to the proline racemase family.

The catalysed reaction is trans-4-hydroxy-L-proline = cis-4-hydroxy-D-proline. Functionally, catalyzes the epimerization of trans-4-hydroxy-L-proline (t4LHyp) to cis-4-hydroxy-D-proline (c4DHyp). Is likely involved in a degradation pathway that converts t4LHyp to alpha-ketoglutarate. Can also catalyze the epimerization of trans-3-hydroxy-L-proline (t3LHyp) to cis-3-hydroxy-D-proline (c3DHyp), albeit with 170-fold lower efficiency. Displays no proline racemase activity. The polypeptide is 4-hydroxyproline 2-epimerase 2 (Brucella anthropi (strain ATCC 49188 / DSM 6882 / CCUG 24695 / JCM 21032 / LMG 3331 / NBRC 15819 / NCTC 12168 / Alc 37) (Ochrobactrum anthropi)).